The primary structure comprises 824 residues: A-adding tRNA nucleotidyltransferase (824 aa).

CBS domains follow at residues 305–363 (MNTP…DEPI) and 367–423 (VNRD…LEKL). 459-462 (GVVR) is an ATP binding site. Residues aspartate 472 and aspartate 474 each coordinate Mg(2+). Residues 545-546 (RD), asparagine 550, 590-599 (DPVRILRALR), arginine 603, and arginine 632 each bind ATP.

It belongs to the tRNA nucleotidyltransferase/poly(A) polymerase family. The cofactor is Mg(2+).

The enzyme catalyses a tRNA with a 3' CC end + ATP = a tRNA with a 3' CCA end + diphosphate. In terms of biological role, tRNA nucleotidyltransferase involved in the synthesis of the tRNA CCA terminus. Adds the terminal adenosine residue to tRNA. Can incorporate CMP into tRNA ending with C74C75 (tRNACC), with very weak efficiency. The chain is A-adding tRNA nucleotidyltransferase from Aquifex aeolicus (strain VF5).